A 482-amino-acid chain; its full sequence is tRNA sulfurtransferase (482 aa).

Positions 61–165 constitute a THUMP domain; sequence LAIRDALTRI…DDRLLLIKGR (105 aa). Residues 183–184, lysine 265, glycine 287, and glutamine 296 contribute to the ATP site; that span reads LI. Cysteine 344 and cysteine 456 are disulfide-bonded. The region spanning 404-482 is the Rhodanese domain; that stretch reads FGPNDVILDI…GFNNVKVYRP (79 aa). The active-site Cysteine persulfide intermediate is the cysteine 456.

The protein belongs to the ThiI family.

Its subcellular location is the cytoplasm. The catalysed reaction is [ThiI sulfur-carrier protein]-S-sulfanyl-L-cysteine + a uridine in tRNA + 2 reduced [2Fe-2S]-[ferredoxin] + ATP + H(+) = [ThiI sulfur-carrier protein]-L-cysteine + a 4-thiouridine in tRNA + 2 oxidized [2Fe-2S]-[ferredoxin] + AMP + diphosphate. The enzyme catalyses [ThiS sulfur-carrier protein]-C-terminal Gly-Gly-AMP + S-sulfanyl-L-cysteinyl-[cysteine desulfurase] + AH2 = [ThiS sulfur-carrier protein]-C-terminal-Gly-aminoethanethioate + L-cysteinyl-[cysteine desulfurase] + A + AMP + 2 H(+). It participates in cofactor biosynthesis; thiamine diphosphate biosynthesis. Its function is as follows. Catalyzes the ATP-dependent transfer of a sulfur to tRNA to produce 4-thiouridine in position 8 of tRNAs, which functions as a near-UV photosensor. Also catalyzes the transfer of sulfur to the sulfur carrier protein ThiS, forming ThiS-thiocarboxylate. This is a step in the synthesis of thiazole, in the thiamine biosynthesis pathway. The sulfur is donated as persulfide by IscS. This Escherichia coli (strain ATCC 8739 / DSM 1576 / NBRC 3972 / NCIMB 8545 / WDCM 00012 / Crooks) protein is tRNA sulfurtransferase.